We begin with the raw amino-acid sequence, 201 residues long: MTKDFEPFVYPPANLIAGVDEVGRGPLVGAVVTAAVILDPNNPIVGLTDSKKLSEKKRNVLFDEIKEKAVAWSLGRCEPEEIDELNILQATMVAMQRAVADLSVQPDFVLIDGNKIPQLPMAAQAVVKGDLRVAEISAASIIAKVTRDREMEVLDAQFPQYGFAKHKGYPTKVHVEALELHGAIEQHRKSFKPVKRILGIE.

Residues 14-201 (NLIAGVDEVG…KPVKRILGIE (188 aa)) enclose the RNase H type-2 domain. Positions 20, 21, and 112 each coordinate a divalent metal cation.

It belongs to the RNase HII family. Mn(2+) is required as a cofactor. Requires Mg(2+) as cofactor.

The protein localises to the cytoplasm. It catalyses the reaction Endonucleolytic cleavage to 5'-phosphomonoester.. Endonuclease that specifically degrades the RNA of RNA-DNA hybrids. The sequence is that of Ribonuclease HII from Photobacterium profundum (strain SS9).